Reading from the N-terminus, the 508-residue chain is Cytochrome P450 monooxygenase dmxR5 (508 aa).

Residues 24 to 44 (LTLGLGAILVVLMSFLAFLSY) traverse the membrane as a helical segment. Residues asparagine 387 and asparagine 405 are each glycosylated (N-linked (GlcNAc...) asparagine). Cysteine 451 is a heme binding site. A glycan (N-linked (GlcNAc...) asparagine) is linked at asparagine 462. The segment at 481 to 508 (EHKKSTQESGHGVPLPSKLSKFSPREEN) is disordered.

Belongs to the cytochrome P450 family. The cofactor is heme.

The protein resides in the membrane. The protein operates within secondary metabolite biosynthesis. Its function is as follows. Cytochrome P450 monooxygenase; part of the gene cluster that mediates the biosynthesis of the dimeric xanthones cryptosporioptides. The pathway begins with the synthesis of atrochrysone thioester by the polyketide synthase dmx-nrPKS. The atrochrysone carboxyl ACP thioesterase dmxR1 then breaks the thioester bond and releases the atrochrysone carboxylic acid from dmx-nrPKS. Atrochrysone carboxylic acid is decarboxylated by the decarboxylase dmxR15, and oxidized by the anthrone oxygenase dmxR16 to yield emodin. Emodin is then reduced to emodin hydroquinone by the oxidoreductase dmxR7. A-ring reduction by the short chain dehydrogenase dmxR18, dehydration by the scytalone dehydratase-like protein dmxR17 and probable spontaneous re-oxidation, results in overall deoxygenation to chrysophanol. Baeyer-Villiger oxidation by the Baeyer-Villiger monooxygenase (BVMO) dmxR6 then yields monodictylactone in equilibrium with monodictyphenone. In the case of the cryptosporioptides biosynthesis, monodictylactone is reduced at C-12 to an alcohol (by the short chain dehydrogenases dmxR12 or dmxR8) and hydroxylated at C-5 by dmxR9, yielding the electron-rich aromatic which could eliminate H(2)O to form the ortho-quinonemethide, followed by tautomerisation to paraquinone and complete the formal reduction to produce the 10-methylgroup. Conjugate addition of C-4a-OH to the resulting paraquinone by the monooxygenase dmxR10 then gives cyclohexadienone, which is then reduced at C-5 by the short chain dehydrogenase dmxR3 to give the dihydroxanthone. The 6,7-epoxide in the cryptosporioptides could be introduced by the cytochrome P450 monooxygenase dmxL3. The highly reducing PKS dmxL2 manufactures butyrate, which is further carboxylated by dmxL1 to form ethylmalonate. It is not yet clear whether the carboxylation occurs while the butyrate is attached to the ACP of dmxL2, but this unusual fungal metabolite could then be esterified to O-5 by the O-acetyltransferase dmxR13. Finally, dimerization performed by dmxR5 gives the observed dimers cryptosporioptides A, B and C as the final products of the pathway. This Cryptosporiopsis sp. (strain 8999) protein is Cytochrome P450 monooxygenase dmxR5.